A 467-amino-acid polypeptide reads, in one-letter code: MSDVLPIILSGGSGTRLWPLSRESYPKQFLPLVGEHSMLQATWLRSAPVAAHAPIVVANEEHRFMAAEQLQQLGVKPSAILLEPKGRNTAPAIAVAALEATRNGGDPLLLVLPSDHVIRDEAAFQAAVTVAAAAAEQGKLVTFGIKPTAPETGYGYIKAGVGTGATAVERFVEKPDLATAQGYLASGEYYWNSGMFLFRASRYLEELRKFQPAIADACQKAWEGGKRDADFTRLDKDAFASSPSDSIDYAVMEKTADAVVVPLDAGWNDVGSWSSLLDVSEQDGQGNAHHGDVIQLDCKNTYAYGSRLIAMVGLENVVVVETDDAVLVGHRDRIQEVKEVVSQIKSAGRSEATWHRKVYRPWGAYDSIDMGQRFQVKRITVKPGATLSLQMHHHRAEHWIVVSGTAEVTRGEEVLLLTENQSTYIPLGVTHRLKNPGKLPLELIEVQSGSYLGEDDIVRFEDTYGRT.

Belongs to the mannose-6-phosphate isomerase type 2 family.

It catalyses the reaction D-mannose 6-phosphate = D-fructose 6-phosphate. It carries out the reaction alpha-D-mannose 1-phosphate + GTP + H(+) = GDP-alpha-D-mannose + diphosphate. It participates in nucleotide-sugar biosynthesis; GDP-alpha-D-mannose biosynthesis; GDP-alpha-D-mannose from alpha-D-mannose 1-phosphate (GTP route): step 1/1. It functions in the pathway nucleotide-sugar biosynthesis; GDP-alpha-D-mannose biosynthesis; alpha-D-mannose 1-phosphate from D-fructose 6-phosphate: step 1/2. Its function is as follows. Involved in xanthan production. The protein is Xanthan biosynthesis protein XanB (xanB) of Xanthomonas campestris pv. campestris (strain ATCC 33913 / DSM 3586 / NCPPB 528 / LMG 568 / P 25).